The sequence spans 180 residues: Der GTPase-activating protein YihI (180 aa).

Disordered stretches follow at residues 1–88 (MTRK…KERR) and 147–180 (PEVT…FGKE). Composition is skewed to basic and acidic residues over residues 18–33 (FREK…ARKS), 50–67 (EALD…DPRL), 77–88 (VEKKPTTKKERR), and 153–163 (APVRKGAKTDE). Residues 164-173 (DLLDQFENMD) are compositionally biased toward acidic residues.

Belongs to the YihI family. In terms of assembly, interacts with Der.

Functionally, a GTPase-activating protein (GAP) that modifies Der/EngA GTPase function. May play a role in ribosome biogenesis. This Photobacterium profundum (strain SS9) protein is Der GTPase-activating protein YihI.